Consider the following 801-residue polypeptide: Phenylalanine--tRNA ligase beta subunit (801 aa).

The region spanning 39-154 (LKMPQKVVVG…GHLELGVELG (116 aa)) is the tRNA-binding domain. The region spanning 398 to 475 (IDEITIKTTF…RIYGIDNVSS (78 aa)) is the B5 domain. Residues D453, D459, E462, and E463 each contribute to the Mg(2+) site. An FDX-ACB domain is found at 708–800 (SKYQKSTRDL…LVREFDAVLR (93 aa)).

The protein belongs to the phenylalanyl-tRNA synthetase beta subunit family. Type 1 subfamily. Tetramer of two alpha and two beta subunits. Requires Mg(2+) as cofactor.

It is found in the cytoplasm. It catalyses the reaction tRNA(Phe) + L-phenylalanine + ATP = L-phenylalanyl-tRNA(Phe) + AMP + diphosphate + H(+). In Helicobacter hepaticus (strain ATCC 51449 / 3B1), this protein is Phenylalanine--tRNA ligase beta subunit.